Here is a 59-residue protein sequence, read N- to C-terminus: UPF0391 membrane protein LPC_1949 (59 aa).

Helical transmembrane passes span 5–25 (ALIF…GIAV) and 30–50 (IAKI…IMGL).

It belongs to the UPF0391 family.

The protein localises to the cell membrane. In Legionella pneumophila (strain Corby), this protein is UPF0391 membrane protein LPC_1949.